We begin with the raw amino-acid sequence, 668 residues long: RNA-binding protein PIN4 (668 aa).

A disordered region spans residues 1-77; sequence METSSFENAP…NLNNAPTNGA (77 aa). Over residues 8–23 the composition is skewed to low complexity; sequence NAPPAAINDAQDNNIN. Polar residues predominate over residues 24 to 36; sequence TETNDQETNQQSI. The span at 37-46 shows a compositional bias: basic and acidic residues; sequence ETRDAIDKEN. Positions 47 to 74 are enriched in polar residues; that stretch reads GVQTETGENSAKNAEQNVSSTNLNNAPT. Serine 56 is modified (phosphoserine). Residues 85–163 enclose the RRM domain; sequence NAIVIKNIPF…RKLKVEYKKM (79 aa). Over residues 168-188 the composition is skewed to basic and acidic residues; it reads ERERIEREKREKRGQLEEQHR. The disordered stretch occupies residues 168-214; it reads ERERIEREKREKRGQLEEQHRSSSNLSLDSLSKMSGSGNNNTSNNQL. 4 positions are modified to phosphoserine: serine 189, serine 191, serine 194, and serine 197. Residues 189-212 show a composition bias toward low complexity; the sequence is SSSNLSLDSLSKMSGSGNNNTSNN. A Phosphothreonine modification is found at threonine 305. 2 disordered regions span residues 374–398 and 420–570; these read QQQGQMTSAHPLQPNSTGGSMNRSQ and VNNS…QRVP. At serine 393 the chain carries Phosphoserine. Over residues 420–449 the composition is skewed to low complexity; the sequence is VNNSSNSNTINSNNGNGNNVIINNNSASST. Residues 450-478 show a composition bias toward polar residues; the sequence is PKISSQGQFSMQPTLTSPKMNIHHSSQYN. A Phosphoserine modification is found at serine 466. A compositionally biased stretch (low complexity) spans 479–508; that stretch reads SADQPQQPQPQTQQNVQSAAQQQQSFLRQQ. Residues 509-551 are compositionally biased toward polar residues; sequence ATLTPSSRIPSGYSANHYQINSVNPLLRNSQISPPNSQIPINS. Position 541 is a phosphoserine (serine 541). The segment covering 552-567 has biased composition (low complexity); sequence QTLSQAQPPAQSQTQQ. Phosphoserine occurs at positions 636, 638, 640, 653, and 655.

Interacts with RAD53. Post-translationally, hyperphosphorylated in response to DNA damage by MEC1.

It is found in the cytoplasm. Involved in normal G2/M phase transition of the mitotic cell cycle. In association with RAD53, also involved in checkpoint control in response to DNA damage. The chain is RNA-binding protein PIN4 (PIN4) from Saccharomyces cerevisiae (strain ATCC 204508 / S288c) (Baker's yeast).